Reading from the N-terminus, the 317-residue chain is Exopolysaccharide production protein ExoZ (317 aa).

7 consecutive transmembrane segments (helical) span residues 14 to 34 (TIGA…MWVI), 53 to 73 (IVPV…AGLF), 100 to 120 (IWPV…YAVF), 132 to 152 (LPVV…VAFD), 185 to 205 (LAVG…IGVL), 206 to 226 (GLPF…IGVL), and 268 to 288 (IGLG…LIGI).

Belongs to the acyltransferase 3 family.

The protein resides in the cell membrane. In terms of biological role, required for the acetyl modification of the third sugar (glucose) of the octasaccharide subunit of succinoglycan (EPS I). The sequence is that of Exopolysaccharide production protein ExoZ (exoZ) from Rhizobium meliloti (strain 1021) (Ensifer meliloti).